The following is a 233-amino-acid chain: Putative cobalt transport protein CbiM (233 aa).

Helical transmembrane passes span 9–29 (PPMW…YGIV), 43–63 (PLVA…MPSV), 75–95 (LGAV…VLLF), 107–127 (TLGA…VIVY), 138–158 (TVGI…TTAV), and 177–197 (IVIY…LTVI).

Belongs to the CbiM family. Forms an energy-coupling factor (ECF) transporter complex composed of an ATP-binding protein (A component, CbiO), a transmembrane protein (T component, CbiQ) and 2 possible substrate-capture proteins (S components, CbiM and CbiN) of unknown stoichimetry.

It localises to the cell membrane. The protein operates within cofactor biosynthesis; adenosylcobalamin biosynthesis. In terms of biological role, part of the energy-coupling factor (ECF) transporter complex CbiMNOQ involved in cobalt import. The chain is Putative cobalt transport protein CbiM from Methanocaldococcus jannaschii (strain ATCC 43067 / DSM 2661 / JAL-1 / JCM 10045 / NBRC 100440) (Methanococcus jannaschii).